The sequence spans 189 residues: GTP cyclohydrolase 1 (189 aa).

Zn(2+) is bound by residues Cys76, His79, and Cys149.

This sequence belongs to the GTP cyclohydrolase I family. In terms of assembly, homomer.

It catalyses the reaction GTP + H2O = 7,8-dihydroneopterin 3'-triphosphate + formate + H(+). The protein operates within cofactor biosynthesis; 7,8-dihydroneopterin triphosphate biosynthesis; 7,8-dihydroneopterin triphosphate from GTP: step 1/1. The sequence is that of GTP cyclohydrolase 1 from Dehalococcoides mccartyi (strain ATCC BAA-2100 / JCM 16839 / KCTC 5957 / BAV1).